We begin with the raw amino-acid sequence, 35 residues long: U2-agatoxin-Aop1a (35 aa).

3 disulfide bridges follow: cysteine 3–cysteine 19, cysteine 10–cysteine 24, and cysteine 18–cysteine 34. Position 35 is a leucine amide (leucine 35).

The protein belongs to the neurotoxin 01 (U2-agtx) family. In terms of tissue distribution, expressed by the venom gland.

It localises to the secreted. Insect-selective toxin causing rapid but reversible paralysis in crickets. Suppresses the excitatory postsynaptic potentials evoked in lobster neuromuscular synaptic preparations, possibly by blocking the presynaptic calcium channel (Cav). Induces instantaneous reversible paralysis when injected into crickets. This is U2-agatoxin-Aop1a from Allagelena opulenta (Funnel weaving spider).